Reading from the N-terminus, the 162-residue chain is Sorting nexin-3 (162 aa).

Alanine 2 carries the N-acetylalanine modification. Residues 27–151 (NFLEIDVSNP…HMFLQDEIID (125 aa)) enclose the PX domain. The residue at position 43 (arginine 43) is an Omega-N-methylarginine. Residues arginine 70, serine 72, lysine 95, and arginine 118 each contribute to the a 1,2-diacyl-sn-glycero-3-phospho-(1D-myo-inositol-3-phosphate) site. Serine 72 bears the Phosphoserine mark. A Glycyl lysine isopeptide (Lys-Gly) (interchain with G-Cter in SUMO2) cross-link involves residue lysine 95. Residues 147–162 (DEIIDKSYTPSKIRHA) are binds predominantly to PtdIns(P5) and weaker to PtdIns(P3) abd PtdIns(P4); involved in neurite outgrowth regulation.

It belongs to the sorting nexin family. Interacts with VPS26A, VPS29. Interacts with VPS35; the interaction with VPS35 is direct. The association with the retromer CSC subcomplex subunits is proposed to represent a functional distinct retromer variant described as SNX3-retromer complex. Interacts with USP10 and SCNN1A. Interacts with TRFC. Interacts with SNX8; 2 molecules of SNX8 seems to associate with one molecule of SNX3. Interacts with PTPRU. Interacts with MON2 and DOP1B. Post-translationally, ubiquitinated, leading to its proteasomal degradation. Deubiquitinated by USP10. As to expression, highly expressed in developing red cells and hematopoietic tissues.

It localises to the early endosome. Its subcellular location is the cytoplasmic vesicle. The protein resides in the phagosome. Its function is as follows. Phosphoinositide-binding protein required for multivesicular body formation. Specifically binds phosphatidylinositol 3-phosphate (PtdIns(P3)). Can also bind phosphatidylinositol 4-phosphate (PtdIns(P4)), phosphatidylinositol 5-phosphate (PtdIns(P5)) and phosphatidylinositol 3,5-biphosphate (PtdIns(3,5)P2). Plays a role in protein transport between cellular compartments. Together with RAB7A facilitates endosome membrane association of the retromer cargo-selective subcomplex (CSC). May act in part as component of the SNX3-retromer complex which mediates the retrograde endosome-to-TGN transport of WLS distinct from the SNX-BAR retromer pathway. Promotes stability and cell surface expression of epithelial sodium channel (ENAC) subunits SCNN1A and SCNN1G. Not involved in EGFR degradation. Involved in the regulation of phagocytosis in dendritic cells possibly by regulating EEA1 recruitment to the nascent phagosomes. Involved in iron homeostasis through regulation of endocytic recycling of the transferrin receptor Tfrc presuambly by delivering the transferrin:transferrin receptor complex to recycling endosomes; the function may involve the CSC retromer subcomplex. Involved in regulation of neurite outgrowth in primary neurons. The protein is Sorting nexin-3 (Snx3) of Mus musculus (Mouse).